A 79-amino-acid polypeptide reads, in one-letter code: Cell division protein ZapB (79 aa).

Residues 3–79 are a coiled coil; that stretch reads LEVFEKLEAK…QALLGRMEEV (77 aa). Lys8 is modified (N6-acetyllysine). The interval 34 to 65 is disordered; sequence NNSLSQEVQNAQHQREELERENNHLKEQQNGW. A compositionally biased stretch (polar residues) spans 35 to 45; sequence NSLSQEVQNAQ. Positions 46-60 are enriched in basic and acidic residues; the sequence is HQREELERENNHLKE.

The protein belongs to the ZapB family. As to quaternary structure, homodimer. The ends of the coiled-coil dimer bind to each other, forming polymers. Interacts with FtsZ.

It localises to the cytoplasm. Its function is as follows. Non-essential, abundant cell division factor that is required for proper Z-ring formation. It is recruited early to the divisome by direct interaction with FtsZ, stimulating Z-ring assembly and thereby promoting cell division earlier in the cell cycle. Its recruitment to the Z-ring requires functional FtsA or ZipA. The chain is Cell division protein ZapB from Shigella boydii serotype 18 (strain CDC 3083-94 / BS512).